We begin with the raw amino-acid sequence, 172 residues long: Adenine phosphoribosyltransferase (172 aa).

Belongs to the purine/pyrimidine phosphoribosyltransferase family. In terms of assembly, homodimer.

It localises to the cytoplasm. It carries out the reaction AMP + diphosphate = 5-phospho-alpha-D-ribose 1-diphosphate + adenine. It participates in purine metabolism; AMP biosynthesis via salvage pathway; AMP from adenine: step 1/1. Its function is as follows. Catalyzes a salvage reaction resulting in the formation of AMP, that is energically less costly than de novo synthesis. The chain is Adenine phosphoribosyltransferase from Clostridium novyi (strain NT).